A 362-amino-acid chain; its full sequence is 3-dehydroquinate synthase (362 aa).

Residues 71-76 (DGEQNK), 105-109 (GVIGD), 129-130 (TT), K142, and K151 each bind NAD(+). Residues E184, H247, and H264 each coordinate Zn(2+).

It belongs to the sugar phosphate cyclases superfamily. Dehydroquinate synthase family. The cofactor is Co(2+). It depends on Zn(2+) as a cofactor. NAD(+) serves as cofactor.

The protein resides in the cytoplasm. It catalyses the reaction 7-phospho-2-dehydro-3-deoxy-D-arabino-heptonate = 3-dehydroquinate + phosphate. It participates in metabolic intermediate biosynthesis; chorismate biosynthesis; chorismate from D-erythrose 4-phosphate and phosphoenolpyruvate: step 2/7. In terms of biological role, catalyzes the conversion of 3-deoxy-D-arabino-heptulosonate 7-phosphate (DAHP) to dehydroquinate (DHQ). The sequence is that of 3-dehydroquinate synthase from Blochmanniella pennsylvanica (strain BPEN).